The following is a 1327-amino-acid chain: P-glycoprotein 14 (1327 aa).

Residues Met-1–Arg-17 are compositionally biased toward basic and acidic residues. Residues Met-1–Thr-23 are disordered. Residues Met-1–Leu-104 lie on the Cytoplasmic side of the membrane. The chain crosses the membrane as a helical span at residues Leu-105 to Val-125. The 289-residue stretch at Phe-106–Asn-394 folds into the ABC transmembrane type-1 1 domain. Topologically, residues Ser-126 to Val-151 are extracellular. Residues Tyr-152–Phe-172 traverse the membrane as a helical segment. Residues Gln-173–Lys-225 are Cytoplasmic-facing. A helical membrane pass occupies residues Leu-226–Tyr-246. Position 247 (Glu-247) is a topological domain, extracellular. The chain crosses the membrane as a helical span at residues Trp-248–Leu-268. At Ala-269–Ser-331 the chain is on the cytoplasmic side. A helical membrane pass occupies residues Gly-332–Tyr-352. Topologically, residues Gly-353 to Thr-364 are extracellular. A helical membrane pass occupies residues Pro-365–Ile-385. Topologically, residues Ser-386 to Phe-766 are cytoplasmic. One can recognise an ABC transporter 1 domain in the interval Val-429–Ala-665. Residue Gly-464–Ser-471 participates in ATP binding. Residues Asp-671 to Lys-721 are disordered. The span at Glu-673 to Asp-686 shows a compositional bias: acidic residues. A compositionally biased stretch (low complexity) spans Arg-694 to Ser-704. Residues Asn-711 to Lys-721 are compositionally biased toward polar residues. Residues Phe-766–Lys-1053 enclose the ABC transmembrane type-1 2 domain. The helical transmembrane segment at Leu-767–Val-789 threads the bilayer. Residues Phe-790–Arg-805 are Extracellular-facing. A helical membrane pass occupies residues Met-806–Ala-826. Residues Ser-827–Arg-886 lie on the Cytoplasmic side of the membrane. A helical membrane pass occupies residues Met-887 to Tyr-907. Over Cys-908–Gln-910 the chain is Extracellular. A helical membrane pass occupies residues Ile-911–Tyr-931. Over Lys-932 to Ser-996 the chain is Cytoplasmic. Residues Leu-997–Ile-1017 form a helical membrane-spanning segment. The Extracellular portion of the chain corresponds to Tyr-1018–Gly-1030. The chain crosses the membrane as a helical span at residues Ile-1031–Phe-1051. Topologically, residues Val-1052 to Val-1327 are cytoplasmic. Residues Ile-1086–Lys-1322 enclose the ABC transporter 2 domain. Gly-1121–Ser-1128 contributes to the ATP binding site.

Belongs to the ABC transporter superfamily. ABCB family. Multidrug resistance exporter (TC 3.A.1.201) subfamily. As to expression, expressed in pharyngeal epithelial cells that surround the anterior pharyngeal cuticle. Shares same expression pattern as sms-5.

Its subcellular location is the apical cell membrane. In terms of biological role, contributes to the establishment of a polar lipid barrier to block small molecule passage into the pharyngeal cuticle. Probably exports polar lipids into the developing pharyngeal cuticle to protect against xenobiotic insult. Likely functions in the same pathway as sphingomyelin synthase sms-5. The polypeptide is P-glycoprotein 14 (Caenorhabditis elegans).